The following is a 199-amino-acid chain: Lipid A acyltransferase PagP (199 aa).

An N-terminal signal peptide occupies residues 1 to 25 (MNYKDIINACILSGVFLLHSPSALA). Catalysis depends on residues His74, Asp117, and Ser118.

This sequence belongs to the lipid A palmitoyltransferase family. Homodimer.

It localises to the cell outer membrane. The enzyme catalyses a lipid A + a 1,2-diacyl-sn-glycero-3-phosphocholine = a hepta-acyl lipid A + a 2-acyl-sn-glycero-3-phosphocholine. The catalysed reaction is a lipid IVA + a 1,2-diacyl-sn-glycero-3-phosphocholine = a lipid IVB + a 2-acyl-sn-glycero-3-phosphocholine. It carries out the reaction a lipid IIA + a 1,2-diacyl-sn-glycero-3-phosphocholine = a lipid IIB + a 2-acyl-sn-glycero-3-phosphocholine. In terms of biological role, transfers a fatty acid residue from the sn-1 position of a phospholipid to the N-linked hydroxyfatty acid chain on the proximal unit of lipid A or its precursors. The sequence is that of Lipid A acyltransferase PagP from Yersinia pestis bv. Antiqua (strain Antiqua).